Reading from the N-terminus, the 158-residue chain is Small ribosomal subunit protein bS6 (158 aa).

The tract at residues Glu98–Asn158 is disordered. Composition is skewed to basic and acidic residues over residues Arg106–Phe117 and Asp127–Arg150.

Belongs to the bacterial ribosomal protein bS6 family.

Functionally, binds together with bS18 to 16S ribosomal RNA. The chain is Small ribosomal subunit protein bS6 from Acidiphilium cryptum (strain JF-5).